Reading from the N-terminus, the 277-residue chain is Shikimate dehydrogenase (NADP(+)) (277 aa).

Shikimate contacts are provided by residues 15–17 (SLS) and Thr-62. Lys-66 functions as the Proton acceptor in the catalytic mechanism. The shikimate site is built by Asn-87 and Asp-102. NADP(+) contacts are provided by residues 127-131 (GAGGA) and Ile-219. A shikimate-binding site is contributed by Tyr-221. Gly-242 contributes to the NADP(+) binding site.

Belongs to the shikimate dehydrogenase family. Homodimer.

The catalysed reaction is shikimate + NADP(+) = 3-dehydroshikimate + NADPH + H(+). It functions in the pathway metabolic intermediate biosynthesis; chorismate biosynthesis; chorismate from D-erythrose 4-phosphate and phosphoenolpyruvate: step 4/7. Functionally, involved in the biosynthesis of the chorismate, which leads to the biosynthesis of aromatic amino acids. Catalyzes the reversible NADPH linked reduction of 3-dehydroshikimate (DHSA) to yield shikimate (SA). This chain is Shikimate dehydrogenase (NADP(+)), found in Bacillus cytotoxicus (strain DSM 22905 / CIP 110041 / 391-98 / NVH 391-98).